The primary structure comprises 93 residues: Small ribosomal subunit protein uS19 (93 aa).

This sequence belongs to the universal ribosomal protein uS19 family.

Protein S19 forms a complex with S13 that binds strongly to the 16S ribosomal RNA. This chain is Small ribosomal subunit protein uS19, found in Desulfitobacterium hafniense (strain Y51).